The following is a 269-amino-acid chain: uncharacterized protein (269 aa).

The HTH gntR-type domain occupies 5-73; sequence APKWRELADR…RGHGTVVRRK (69 aa). The segment at residues 33–52 is a DNA-binding region (H-T-H motif); that stretch reads IRDLVEAGEGSKETVHRAYK.

Its function is as follows. The imp locus inhibits the extrachromosomal maintenance of the Streptomyces plasmid SLP1. This is an uncharacterized protein from Streptomyces coelicolor (strain ATCC BAA-471 / A3(2) / M145).